The primary structure comprises 247 residues: tRNA pseudouridine synthase A (247 aa).

The active-site Nucleophile is Asp-53. Tyr-112 provides a ligand contact to substrate.

This sequence belongs to the tRNA pseudouridine synthase TruA family. In terms of assembly, homodimer.

The catalysed reaction is uridine(38/39/40) in tRNA = pseudouridine(38/39/40) in tRNA. Its function is as follows. Formation of pseudouridine at positions 38, 39 and 40 in the anticodon stem and loop of transfer RNAs. This is tRNA pseudouridine synthase A from Anaplasma marginale (strain Florida).